The chain runs to 367 residues: Endopolygalacturonase B (367 aa).

The first 17 residues, 1–17 (MHFQLLGLAALGSLAAA), serve as a signal peptide directing secretion. A propeptide spanning residues 18-30 (APAPSRTSELVER) is cleaved from the precursor. An intrachain disulfide couples cysteine 34 to cysteine 49. PbH1 repeat units lie at residues 161–191 (GNDV…DVSE), 192–213 (SNGV…AINS), 214–234 (GENI…SIGS), 243–264 (VKNV…RIKT), and 272–294 (VSGV…VIEQ). Aspartate 206 acts as the Proton donor in catalysis. Cysteine 208 and cysteine 224 are oxidised to a cystine. Residue histidine 228 is part of the active site. Residue asparagine 279 is glycosylated (N-linked (GlcNAc...) asparagine). 2 cysteine pairs are disulfide-bonded: cysteine 334/cysteine 339 and cysteine 358/cysteine 367.

This sequence belongs to the glycosyl hydrolase 28 family.

The protein localises to the secreted. The catalysed reaction is (1,4-alpha-D-galacturonosyl)n+m + H2O = (1,4-alpha-D-galacturonosyl)n + (1,4-alpha-D-galacturonosyl)m.. Functionally, involved in maceration and soft-rotting of plant tissue. Hydrolyzes the 1,4-alpha glycosidic bonds of de-esterified pectate in the smooth region of the plant cell wall. In Aspergillus flavus (strain ATCC MYA-384 / AF70), this protein is Endopolygalacturonase B (pgaB).